The following is a 499-amino-acid chain: Glycerol kinase (499 aa).

Residue threonine 14 coordinates ADP. Residues threonine 14, threonine 15, and serine 16 each contribute to the ATP site. Threonine 14 contributes to the sn-glycerol 3-phosphate binding site. Residue arginine 18 coordinates ADP. 4 residues coordinate sn-glycerol 3-phosphate: arginine 84, glutamate 85, tyrosine 136, and aspartate 245. 5 residues coordinate glycerol: arginine 84, glutamate 85, tyrosine 136, aspartate 245, and glutamine 246. ADP-binding residues include threonine 267 and glycine 310. Residues threonine 267, glycine 310, glutamine 314, and glycine 411 each contribute to the ATP site. 2 residues coordinate ADP: glycine 411 and asparagine 415.

This sequence belongs to the FGGY kinase family.

It catalyses the reaction glycerol + ATP = sn-glycerol 3-phosphate + ADP + H(+). Its pathway is polyol metabolism; glycerol degradation via glycerol kinase pathway; sn-glycerol 3-phosphate from glycerol: step 1/1. Its activity is regulated as follows. Inhibited by fructose 1,6-bisphosphate (FBP). In terms of biological role, key enzyme in the regulation of glycerol uptake and metabolism. Catalyzes the phosphorylation of glycerol to yield sn-glycerol 3-phosphate. The chain is Glycerol kinase from Nitrosomonas eutropha (strain DSM 101675 / C91 / Nm57).